An 88-amino-acid polypeptide reads, in one-letter code: Small ribosomal subunit protein bS20 (88 aa).

Disordered stretches follow at residues 1 to 23 (MANS…HNAA) and 69 to 88 (PNKA…AMAA). Positions 69–81 (PNKAARHKSRLNT) are enriched in basic residues.

It belongs to the bacterial ribosomal protein bS20 family.

Binds directly to 16S ribosomal RNA. The protein is Small ribosomal subunit protein bS20 of Alcanivorax borkumensis (strain ATCC 700651 / DSM 11573 / NCIMB 13689 / SK2).